A 228-amino-acid polypeptide reads, in one-letter code: LexA repressor (228 aa).

Residues 26-46 (FDEMKEALDLRSKSGIHRLIT) constitute a DNA-binding region (H-T-H motif). Catalysis depends on for autocatalytic cleavage activity residues serine 149 and lysine 187.

It belongs to the peptidase S24 family. In terms of assembly, homodimer.

The enzyme catalyses Hydrolysis of Ala-|-Gly bond in repressor LexA.. In terms of biological role, represses a number of genes involved in the response to DNA damage (SOS response), including recA and lexA. In the presence of single-stranded DNA, RecA interacts with LexA causing an autocatalytic cleavage which disrupts the DNA-binding part of LexA, leading to derepression of the SOS regulon and eventually DNA repair. This chain is LexA repressor, found in Jannaschia sp. (strain CCS1).